Reading from the N-terminus, the 217-residue chain is Peroxiredoxin (217 aa).

In terms of domain architecture, Thioredoxin spans 2–159 (AVIGEKFPDV…VVRLVKALQT (158 aa)). Residue Cys46 is the Cysteine sulfenic acid (-SOH) intermediate of the active site. Arg122 is a binding site for substrate.

The protein belongs to the peroxiredoxin family. Prx6 subfamily. As to quaternary structure, homodecamer. Pentamer of dimers that assemble into a ring structure.

The protein localises to the cytoplasm. It carries out the reaction a hydroperoxide + [thioredoxin]-dithiol = an alcohol + [thioredoxin]-disulfide + H2O. Its function is as follows. Thiol-specific peroxidase that catalyzes the reduction of hydrogen peroxide and organic hydroperoxides to water and alcohols, respectively. Plays a role in cell protection against oxidative stress by detoxifying peroxides. This Methanococcus vannielii (strain ATCC 35089 / DSM 1224 / JCM 13029 / OCM 148 / SB) protein is Peroxiredoxin.